Here is a 254-residue protein sequence, read N- to C-terminus: MSRRILIAGNWKMNMRAESGASLAKGIVDAVGKSPAVEVVLCPPSVYLSGVADAVVGTPVELGAQNLYAAEDGAFTGEVNASMLTDVGCRFVILGHSERRQLMGETDACVAKKLHAALAGNLVPIVCVGETLEQREADDTESVIETQIRGSLEGLDEARAANIVIAYEPVWAIGTGKTASKEQAEAVHAFIRELLGKMFSTEVAEQIRIQYGGSVKPGNAEELLSQPNIDGALVGGSSLKVDDFAGIIKAAPSA.

Residue 10–12 coordinates substrate; sequence NWK. H96 acts as the Electrophile in catalysis. E168 functions as the Proton acceptor in the catalytic mechanism. Substrate contacts are provided by residues G174, S214, and 235–236; that span reads GG.

The protein belongs to the triosephosphate isomerase family. In terms of assembly, homodimer.

Its subcellular location is the cytoplasm. The catalysed reaction is D-glyceraldehyde 3-phosphate = dihydroxyacetone phosphate. It functions in the pathway carbohydrate biosynthesis; gluconeogenesis. It participates in carbohydrate degradation; glycolysis; D-glyceraldehyde 3-phosphate from glycerone phosphate: step 1/1. Its function is as follows. Involved in the gluconeogenesis. Catalyzes stereospecifically the conversion of dihydroxyacetone phosphate (DHAP) to D-glyceraldehyde-3-phosphate (G3P). The sequence is that of Triosephosphate isomerase from Rhodopirellula baltica (strain DSM 10527 / NCIMB 13988 / SH1).